Reading from the N-terminus, the 606-residue chain is Putative mitochondrial ATP-dependent helicase irc3 (606 aa).

The Helicase ATP-binding domain maps to 40 to 201 (NAFDEGKRRI…ACGLDEIVYH (162 aa)). An ATP-binding site is contributed by 53 to 60 (LATGSGKT). The DEAH box motif lies at 148 to 151 (DEVH). In terms of domain architecture, Helicase C-terminal spans 246–398 (QSEKAIFEIP…LSPDEVENFY (153 aa)).

The protein belongs to the helicase family. IRC3 subfamily.

It localises to the mitochondrion. In Schizosaccharomyces pombe (strain 972 / ATCC 24843) (Fission yeast), this protein is Putative mitochondrial ATP-dependent helicase irc3 (irc3).